The following is a 573-amino-acid chain: Urease subunit alpha (573 aa).

The Urease domain occupies Gly-136 to Phe-573. Positions 141, 143, and 224 each coordinate Ni(2+). Lys-224 bears the N6-carboxylysine mark. His-226 contacts substrate. Positions 253 and 279 each coordinate Ni(2+). His-327 (proton donor) is an active-site residue. Asp-367 lines the Ni(2+) pocket.

Belongs to the metallo-dependent hydrolases superfamily. Urease alpha subunit family. In terms of assembly, heterotrimer of UreA (gamma), UreB (beta) and UreC (alpha) subunits. Three heterotrimers associate to form the active enzyme. Requires Ni cation as cofactor. In terms of processing, carboxylation allows a single lysine to coordinate two nickel ions.

The protein localises to the cytoplasm. The enzyme catalyses urea + 2 H2O + H(+) = hydrogencarbonate + 2 NH4(+). Its pathway is nitrogen metabolism; urea degradation; CO(2) and NH(3) from urea (urease route): step 1/1. This Rhodococcus opacus (strain B4) protein is Urease subunit alpha.